The primary structure comprises 376 residues: NifS-like protein (376 aa).

Pyridoxal 5'-phosphate is bound by residues 58–59 and 184–186; these read SE and SLN.

This sequence belongs to the class-V pyridoxal-phosphate-dependent aminotransferase family. NifS/IscS subfamily. It depends on pyridoxal 5'-phosphate as a cofactor.

The protein resides in the virion. The sequence is that of NifS-like protein from African swine fever virus (isolate Tick/Malawi/Lil 20-1/1983) (ASFV).